A 245-amino-acid polypeptide reads, in one-letter code: Carboxy-S-adenosyl-L-methionine synthase (245 aa).

Residues Tyr42, Gly67–Ser69, Asp92–Asn93, Asp120–Ile121, Asn135, and Arg202 each bind S-adenosyl-L-methionine.

It belongs to the class I-like SAM-binding methyltransferase superfamily. Cx-SAM synthase family. As to quaternary structure, homodimer.

The enzyme catalyses prephenate + S-adenosyl-L-methionine = carboxy-S-adenosyl-L-methionine + 3-phenylpyruvate + H2O. Its function is as follows. Catalyzes the conversion of S-adenosyl-L-methionine (SAM) to carboxy-S-adenosyl-L-methionine (Cx-SAM). This Vibrio parahaemolyticus serotype O3:K6 (strain RIMD 2210633) protein is Carboxy-S-adenosyl-L-methionine synthase.